The following is a 212-amino-acid chain: Probable GTP-binding protein EngB (212 aa).

Residues 38–210 (ALPQIAFVGK…KTSLAKCIKL (173 aa)) form the EngB-type G domain. GTP contacts are provided by residues 46 to 53 (GKSNVGKS), 73 to 77 (GRTRQ), 91 to 94 (DLPG), 158 to 161 (TKSD), and 189 to 191 (VSS). Residues Ser53 and Thr75 each contribute to the Mg(2+) site.

Belongs to the TRAFAC class TrmE-Era-EngA-EngB-Septin-like GTPase superfamily. EngB GTPase family. It depends on Mg(2+) as a cofactor.

In terms of biological role, necessary for normal cell division and for the maintenance of normal septation. This chain is Probable GTP-binding protein EngB, found in Rickettsia bellii (strain OSU 85-389).